A 547-amino-acid polypeptide reads, in one-letter code: Nitrate transporter 2.1 (547 aa).

The next 12 helical transmembrane spans lie at 53-73, 86-106, 113-133, 143-163, 173-193, 211-231, 262-280, 296-316, 338-358, 366-386, 400-420, and 433-453; these read WICF…APII, NAGV…GIVV, YGAA…ALVT, FFIG…GTMF, AIAA…MPLI, AFFV…LLGI, LGNY…SFGV, FGLN…MNLF, IWAL…LGKV, IVIM…HFGI, GLVG…WFAG, and GFVY…FIWF.

Belongs to the major facilitator superfamily. Nitrate/nitrite porter (TC 2.A.1.8) family.

It localises to the cell membrane. With respect to regulation, nitrite transport mediated by system 1 is very sensitive to inhibition by nitrate. Functionally, involved in nitrate transport, but does not seem to be able to mediate transport by its own. Acts as a dual component transporter with NAR2 (system 1). Imports nitrate with high affinity when expressed with NAR2 in a heterologous system (Xenopus oocytes). Involved in a high affinity and a high capacity transport specific for both nitrate and nitrite. This chain is Nitrate transporter 2.1, found in Chlamydomonas reinhardtii (Chlamydomonas smithii).